The sequence spans 210 residues: MPPKNKEKGKKSGAQKKKKNWGADVVAESRHRLVVLEKELLRDHLALRRDEARRAKASEDQLRQRLQGVEAELEGARSEGKAIYAEMSRQCHALQEDMQTRSKQLEEEVKGLRGQLEACQREAAAAREEAEQALGERDQALAQLRAHMADMEAKYEEILHDSLDRLLAKLRAIKQQWDGAALRLHARHKEQQRQFGLTPPGSLRPPAPSL.

Residues 1–23 (MPPKNKEKGKKSGAQKKKKNWGA) are disordered. The span at 7-20 (EKGKKSGAQKKKKN) shows a compositional bias: basic residues. Positions 49-161 (RDEARRAKAS…EAKYEEILHD (113 aa)) form a coiled coil. A disordered region spans residues 188–210 (HKEQQRQFGLTPPGSLRPPAPSL).

The protein belongs to the DRC12 family. Component of the nexin-dynein regulatory complex (N-DRC).

Its subcellular location is the cytoplasm. It localises to the cytoskeleton. The protein resides in the flagellum axoneme. Component of the nexin-dynein regulatory complex (N-DRC), a key regulator of ciliary/flagellar motility which maintains the alignment and integrity of the distal axoneme and regulates microtubule sliding in motile axonemes. The sequence is that of Dynein regulatory complex protein 12 from Homo sapiens (Human).